We begin with the raw amino-acid sequence, 237 residues long: Proteasome subunit alpha type-5 (237 aa).

It belongs to the peptidase T1A family. The 26S proteasome consists of a 20S proteasome core and two 19S regulatory subunits. The 20S proteasome core is composed of 28 subunits that are arranged in four stacked rings, resulting in a barrel-shaped structure. The two end rings are each formed by seven alpha subunits, and the two central rings are each formed by seven beta subunits. The catalytic chamber with the active sites is on the inside of the barrel.

Its subcellular location is the cytoplasm. The protein resides in the nucleus. Its function is as follows. The proteasome is a multicatalytic proteinase complex which is characterized by its ability to cleave peptides with Arg, Phe, Tyr, Leu, and Glu adjacent to the leaving group at neutral or slightly basic pH. The proteasome has an ATP-dependent proteolytic activity. The chain is Proteasome subunit alpha type-5 (PAE1) from Oryza sativa subsp. japonica (Rice).